A 265-amino-acid polypeptide reads, in one-letter code: DNA repair protein RecO (265 aa).

The protein belongs to the RecO family.

Involved in DNA repair and RecF pathway recombination. The polypeptide is DNA repair protein RecO (Mycolicibacterium paratuberculosis (strain ATCC BAA-968 / K-10) (Mycobacterium paratuberculosis)).